The following is an 86-amino-acid chain: U2-sicaritoxin-Li1b (86 aa).

Residues 1 to 20 (MKIELFLVVIFALAIHMATA) form the signal peptide. Positions 21 to 33 (EEVIESDIEPAER) are excised as a propeptide. Cystine bridges form between cysteine 35–cysteine 53, cysteine 42–cysteine 62, cysteine 52–cysteine 71, and cysteine 64–cysteine 69. Lysine 85 bears the Lysine amide mark.

Belongs to the neurotoxin 39 family. As to expression, expressed by the venom gland.

Its subcellular location is the secreted. Functionally, toxin active against S.frugiperda larvae. May act on sodium channels (Nav). The sequence is that of U2-sicaritoxin-Li1b from Loxosceles intermedia (Brown spider).